The sequence spans 363 residues: Holliday junction branch migration complex subunit RuvB (363 aa).

A disordered region spans residues 1–44; that stretch reads MAIKRNQGHGLPPKRDPALGRDALTTSQALPEDQEQSANEDRIR. Residues 13 to 204 are large ATPase domain (RuvB-L); it reads PKRDPALGRD…FGLIQRLRFY (192 aa). Residues Ile-43, Arg-44, Gly-85, Lys-88, Thr-89, Thr-90, Arg-194, Tyr-204, and Arg-241 each coordinate ATP. Thr-89 contacts Mg(2+). The segment at 205–275 is small ATPAse domain (RuvB-S); that stretch reads EVDELIAIVH…VAATALDLYN (71 aa). The interval 278–363 is head domain (RuvB-H); sequence ALGLDWTDRL…EQSTQLDFLP (86 aa). The DNA site is built by Arg-333 and Arg-338.

Belongs to the RuvB family. Homohexamer. Forms an RuvA(8)-RuvB(12)-Holliday junction (HJ) complex. HJ DNA is sandwiched between 2 RuvA tetramers; dsDNA enters through RuvA and exits via RuvB. An RuvB hexamer assembles on each DNA strand where it exits the tetramer. Each RuvB hexamer is contacted by two RuvA subunits (via domain III) on 2 adjacent RuvB subunits; this complex drives branch migration. In the full resolvosome a probable DNA-RuvA(4)-RuvB(12)-RuvC(2) complex forms which resolves the HJ.

Its subcellular location is the cytoplasm. It catalyses the reaction ATP + H2O = ADP + phosphate + H(+). Its function is as follows. The RuvA-RuvB-RuvC complex processes Holliday junction (HJ) DNA during genetic recombination and DNA repair, while the RuvA-RuvB complex plays an important role in the rescue of blocked DNA replication forks via replication fork reversal (RFR). RuvA specifically binds to HJ cruciform DNA, conferring on it an open structure. The RuvB hexamer acts as an ATP-dependent pump, pulling dsDNA into and through the RuvAB complex. RuvB forms 2 homohexamers on either side of HJ DNA bound by 1 or 2 RuvA tetramers; 4 subunits per hexamer contact DNA at a time. Coordinated motions by a converter formed by DNA-disengaged RuvB subunits stimulates ATP hydrolysis and nucleotide exchange. Immobilization of the converter enables RuvB to convert the ATP-contained energy into a lever motion, pulling 2 nucleotides of DNA out of the RuvA tetramer per ATP hydrolyzed, thus driving DNA branch migration. The RuvB motors rotate together with the DNA substrate, which together with the progressing nucleotide cycle form the mechanistic basis for DNA recombination by continuous HJ branch migration. Branch migration allows RuvC to scan DNA until it finds its consensus sequence, where it cleaves and resolves cruciform DNA. In Picosynechococcus sp. (strain ATCC 27264 / PCC 7002 / PR-6) (Agmenellum quadruplicatum), this protein is Holliday junction branch migration complex subunit RuvB.